The chain runs to 766 residues: Oligopeptide transporter 7 (766 aa).

Residues 1 to 58 are disordered; sequence MEESEQVLPLLTNPKDLTNPSYASSSSSSSEPRDETEDLLLPISDENEEEEEENSPIR. Residues 45–54 are compositionally biased toward acidic residues; that stretch reads DENEEEEEEN. 15 consecutive transmembrane segments (helical) span residues 79–99, 104–124, 154–174, 184–204, 247–267, 287–307, 324–344, 390–410, 446–466, 477–497, 509–529, 561–581, 627–647, 676–696, and 709–729; these read MWVLGTLSCILLSFLNQFFWY, LTISAISAQIAVVPLGRLMAA, ITIFANAGAGSVYAIHVVTVV, FFVSFIVIVTTQVLGFGWAGI, FVIAFVCSFAYYVFPGYLFQI, IGSGLHGLGVGAIGLDWSTIS, VGVGFVLVIYVLVPICYWLDV, LCTFFAISYGVGFAALSATIM, VPEWWFWCILVTNVGATIFAC, WWGVLLACTVAIIFTLPIGII, IITEYIIGYIYPGYPVANMCF, FMAQIVGTLISCFVYLTTAWW, LYKSVNWFFLVGAIAPILVWL, ATAVNYTTWVLAGFLSGFVVF, and VLSGALDAGLAFMGVLLYMCL.

Belongs to the oligopeptide OPT transporter (TC 2.A.67.1) family. Expressed in the major and the first-order veins and in the hydathodes of the leaves. In the roots, expressed in circular zones surrounding lateral root primordia and in some part of the root epidermis. Expressed also in the sepals and the cortical tissues of the stem, but not in the conducting bundles, the petals or the reproductive tissues.

The protein resides in the membrane. Its function is as follows. Involved in the translocation of tetra- and pentapeptides across the cellular membrane in an energy-dependent manner. May also transport cadmium complexes. This chain is Oligopeptide transporter 7 (OPT7), found in Arabidopsis thaliana (Mouse-ear cress).